A 104-amino-acid polypeptide reads, in one-letter code: Urease subunit beta (104 aa).

Belongs to the urease beta subunit family. As to quaternary structure, heterotrimer of UreA (gamma), UreB (beta) and UreC (alpha) subunits. Three heterotrimers associate to form the active enzyme.

It localises to the cytoplasm. It catalyses the reaction urea + 2 H2O + H(+) = hydrogencarbonate + 2 NH4(+). It functions in the pathway nitrogen metabolism; urea degradation; CO(2) and NH(3) from urea (urease route): step 1/1. This chain is Urease subunit beta, found in Rhodococcus opacus (strain B4).